Consider the following 398-residue polypeptide: Neuroplastin (398 aa).

The first 28 residues, 1–28, serve as a signal peptide directing secretion; it reads MSGSSLPSALALSLLLVSGSLLPGPGAA. Ig-like domains lie at 29–134, 148–235, and 238–329; these read QNAG…PSIT, PRIV…IEVK, and PDIT…SVVT. Residues 29–339 are Extracellular-facing; it reads QNAGFVKSPM…VLRVRSHLAP (311 aa). C52 and C116 are disulfide-bonded. The segment at 149–161 is narpin; mediates binding with FGFR1 and has antidepressant-like activity; it reads RIVTSEEVIIRDS. C170 and C218 are oxidised to a cystine. Residues N171, N197, N229, N284, N296, and N317 are each glycosylated (N-linked (GlcNAc...) asparagine). C259 and C316 are oxidised to a cystine. A helical membrane pass occupies residues 340–360; that stretch reads LWPFLGILAEIIILVVIIVVY. Residues 361–398 are Cytoplasmic-facing; it reads EKRKRPDEVPDDDEPAGPMKTNSTNNHKDKNLRQRNTN. A disordered region spans residues 365 to 398; the sequence is RPDEVPDDDEPAGPMKTNSTNNHKDKNLRQRNTN.

Interacts with ATP2B1; this interaction stabilizes ATP2B1 and increases ATPase activity; this interaction controls T cell calcium homeostasis following T cell activation. Interacts with XKR8; promoting its localization at the cell membrane. In terms of tissue distribution, isoform 1 is ubiquitously expressed. Isoform 2 is expressed in brain cortex and cerebellum (at protein level).

It localises to the cell membrane. It is found in the postsynaptic density. Probable homophilic and heterophilic cell adhesion molecule involved in long term potentiation at hippocampal excitatory synapses through activation of p38MAPK. May also regulate neurite outgrowth by activating the FGFR1 signaling pathway. May play a role in synaptic plasticity. Also acts as a chaperone for ATP2B1; stabilizes ATP2B1 and increases its ATPase activity. Promotes localization of XKR8 at the cell membrane. The chain is Neuroplastin (NPTN) from Homo sapiens (Human).